We begin with the raw amino-acid sequence, 577 residues long: Proline--tRNA ligase (577 aa).

This sequence belongs to the class-II aminoacyl-tRNA synthetase family. ProS type 1 subfamily. In terms of assembly, homodimer.

Its subcellular location is the cytoplasm. It catalyses the reaction tRNA(Pro) + L-proline + ATP = L-prolyl-tRNA(Pro) + AMP + diphosphate. Catalyzes the attachment of proline to tRNA(Pro) in a two-step reaction: proline is first activated by ATP to form Pro-AMP and then transferred to the acceptor end of tRNA(Pro). As ProRS can inadvertently accommodate and process non-cognate amino acids such as alanine and cysteine, to avoid such errors it has two additional distinct editing activities against alanine. One activity is designated as 'pretransfer' editing and involves the tRNA(Pro)-independent hydrolysis of activated Ala-AMP. The other activity is designated 'posttransfer' editing and involves deacylation of mischarged Ala-tRNA(Pro). The misacylated Cys-tRNA(Pro) is not edited by ProRS. The sequence is that of Proline--tRNA ligase from Helicobacter pylori (strain G27).